Reading from the N-terminus, the 117-residue chain is Protein SMALL AUXIN UP-REGULATED RNA 54 (117 aa).

It belongs to the ARG7 family. In terms of tissue distribution, expressed in trichomes. Hardly observed in leaves.

The protein localises to the cell membrane. In terms of biological role, provide a mechanistic link between auxin and plasma membrane H(+)-ATPases (PM H(+)-ATPases, e.g. AHA1 and AHA2), and triggers PM H(+)-ATPases activity by promoting phosphorylation of their C-terminal autoinhibitory domain as a result of PP2C-D subfamily of type 2C phosphatases inhibition, thus leading to the acidification of the apoplast and the facilitation of solutes and water uptake to drive cell expansion. Triggers plant growth probably by promoting cell elongation. Regulates branch angles and bending. The sequence is that of Protein SMALL AUXIN UP-REGULATED RNA 54 from Arabidopsis thaliana (Mouse-ear cress).